Reading from the N-terminus, the 336-residue chain is tRNA N6-adenosine threonylcarbamoyltransferase (336 aa).

Fe cation contacts are provided by His-112 and His-116. Residues 136–140 (LVSGG), Asp-169, Gly-182, and Asn-276 contribute to the substrate site. Asp-304 contacts Fe cation.

The protein belongs to the KAE1 / TsaD family. Requires Fe(2+) as cofactor.

The protein localises to the cytoplasm. It carries out the reaction L-threonylcarbamoyladenylate + adenosine(37) in tRNA = N(6)-L-threonylcarbamoyladenosine(37) in tRNA + AMP + H(+). In terms of biological role, required for the formation of a threonylcarbamoyl group on adenosine at position 37 (t(6)A37) in tRNAs that read codons beginning with adenine. Is involved in the transfer of the threonylcarbamoyl moiety of threonylcarbamoyl-AMP (TC-AMP) to the N6 group of A37, together with TsaE and TsaB. TsaD likely plays a direct catalytic role in this reaction. The polypeptide is tRNA N6-adenosine threonylcarbamoyltransferase (Francisella tularensis subsp. tularensis (strain FSC 198)).